Consider the following 278-residue polypeptide: Serine/arginine-rich splicing factor SR34B (278 aa).

The RRM 1 domain occupies 7–82 (RTIYVGNLPG…HHLRVELAHG (76 aa)). A compositionally biased stretch (basic and acidic residues) spans 81 to 91 (HGGRRSSHDAR). 2 disordered regions span residues 81 to 121 (HGGR…SEYR) and 192 to 263 (EYDS…RSLS). Gly residues predominate over residues 95-107 (SGRGRGGRGGGDG). Basic and acidic residues-rich tracts occupy residues 108 to 120 (GGRERGPSRRSEY) and 192 to 201 (EYDSRRDSRS). An RRM 2 domain is found at 120–195 (YRVVVSGLPS…EYVRVREYDS (76 aa)). Ser-201, Ser-203, Ser-225, Ser-231, Ser-233, Ser-242, Ser-250, Ser-259, and Ser-263 each carry phosphoserine. Over residues 207 to 243 (SYSKSRSRGRSPSRSRSRSRSRSKSRSPKAKSLRRSP) the composition is skewed to basic residues.

It belongs to the splicing factor SR family. SR subfamily. As to quaternary structure, component of the spliceosome.

The protein localises to the nucleus speckle. It localises to the nucleus. It is found in the nucleoplasm. Functionally, probably involved in intron recognition and spliceosome assembly. The sequence is that of Serine/arginine-rich splicing factor SR34B (SR34B) from Arabidopsis thaliana (Mouse-ear cress).